Here is an 868-residue protein sequence, read N- to C-terminus: Metabotropic glutamate receptor 6 (868 aa).

An N-terminal signal peptide occupies residues 1-20 (MARLLLALLAWLAQMSPVRA). The Extracellular segment spans residues 21–576 (AGSVRLAGGL…VVRLTWSSPW (556 aa)). Cys48 and Cys90 are oxidised to a cystine. L-glutamate-binding positions include Ser145, 166–168 (AST), and Tyr216. Disulfide bonds link Cys235–Cys527, Cys358–Cys374, Cys414–Cys421, Cys509–Cys528, Cys513–Cys531, Cys534–Cys546, and Cys549–Cys562. Asn287 carries an N-linked (GlcNAc...) asparagine glycan. Asp298 is an L-glutamate binding site. Residue Lys391 coordinates L-glutamate. Residues Asn442 and Asn470 are each glycosylated (N-linked (GlcNAc...) asparagine). Asn558 is a glycosylation site (N-linked (GlcNAc...) asparagine). A helical transmembrane segment spans residues 577-599 (AAPPLLLAVLGIMATTTVVGTFV). At 600-613 (RHNNTPIVRASGRE) the chain is on the cytoplasmic side. Residues 614–634 (LSYVLLTGIFLIYAVTFLMVA) traverse the membrane as a helical segment. Topologically, residues 635–645 (EPGAAVCATRR) are extracellular. A helical membrane pass occupies residues 646–664 (LFLGLGTTLSYSALLTKTN). Residues 665–688 (RIYRIFEQGKRSVTPPPFISPTSQ) are Cytoplasmic-facing. A helical transmembrane segment spans residues 689–709 (LVITFSLTSLQVVGVIAWLGA). Over 710–739 (QPPHSVIDYEEQRTVDPEQARGVLKCDMSD) the chain is Extracellular. Residues 740 to 761 (LSLIGCLGYSLLLMVTCTVYAI) form a helical membrane-spanning segment. The Cytoplasmic segment spans residues 762–774 (KARGVPETFNEAK). A helical transmembrane segment spans residues 775 to 797 (PIGFTMYTTCIVWLAFVPIFFGT). At 798 to 810 (AQSAEKIYIQTTT) the chain is on the extracellular side. The helical transmembrane segment at 811–836 (LTVSLSLSASVSLGMLYVPKTYVILF) threads the bilayer. Residues 837 to 868 (HPEQNVQKRKRSLKTTSTVAAPPKGADTEDPK) are Cytoplasmic-facing. The tract at residues 845-868 (RKRSLKTTSTVAAPPKGADTEDPK) is disordered.

This sequence belongs to the G-protein coupled receptor 3 family. As to quaternary structure, homodimer. Interacts with GPR179. Interacts with photoreceptor synaptic protein LRIT1 (via its N-terminal extracellular domain).

It localises to the cell membrane. Its subcellular location is the endoplasmic reticulum membrane. The protein resides in the golgi apparatus membrane. It is found in the cell projection. The protein localises to the dendrite. Functionally, G-protein coupled receptor for glutamate. Ligand binding causes a conformation change that triggers signaling via guanine nucleotide-binding proteins (G proteins) and modulates the activity of down-stream effectors, such as adenylate cyclase. Signaling inhibits adenylate cyclase activity. Signaling stimulates TRPM1 channel activity and Ca(2+) uptake. Required for normal vision. The sequence is that of Metabotropic glutamate receptor 6 (GRM6) from Oryctolagus cuniculus (Rabbit).